The sequence spans 2774 residues: MDGVAEFSEYVSETVDVPSPFDLLEPPTSGGFLKLSKPCCYIFPGGRGDSALFAVNGFNILVDGGSDRKSCFWKLVRHLDRIDSVLLTHIGADNLPGINGLLQRKVAELEEEQSQGSSSYSDWVKNLISPELGVVFFNVPDKLRLPDASRKAKRSIEEACLTLQHLNRLGIQAEPLYRVVSNTIEPLTLFHKMGVGRLDMYVLNPVKDSKEMQFLMQKWAGNSKAKTGIVLANGKEAEISVPYLTSITALVVWLPANPTEKIVRVLFPGNAPQNKILEGLEKLRHLDFLRYPVATQKDLAAGAVPANLKPSKIKHRADSKESLKAAPKTAVSKLAKREEVLEEGAKEARSELAKELAKTEKKAKEPSEKPPEKPSKSERVRGESSEALKAEKRRLIKDKAGKKHLKEKISKLEEKKDKEKKEIKKERKELKKEEGRKEEKKDAKKDEKRKDTKPEVKKLSKPDLKPFTPEVRKTLYKAKAPGRVKVDKGRAARGEKELSSEPRTPPAQKGAAPPAAVSGHRELALSSPEDLTQDFEELKREERGLLAEQRDTGLGEKPLPADATEQGHPSAAIQVTQPSGPVLEGEHVEREKEVVPDSPGDKGSTNRGPDSGAEVEKEKETWEERKQREAELGPENTAAREESEAEVKEDVIEKAELEEMEETHPSDEEGEETKAESFYQKHTQEALKASPKSREALGGRDLGFQGKAPEKETASFLSSLATPAGATEHVSYIQDETIPGYSETEQTISDEEIHDEPDERPAPPRFPTSTYDLSGPEGPGPFEASQAADSAVPASSSKTYGAPETELTYPPNMVAAPLAEEEHVSSATSITECDKLSSFATSVAEDQSVASLTAPQTEETGKSSLLLDTVTSIPSSRTEATQGLDYVPSAGTISPTSSLEEDKGFKSPPCEDFSVTGESEKKGETVGRGLSGEKAVGKEEKYVVTSEKLSGQYAAVFGAPGHTLPPGEPALGEVEERCLSPDDSTVKMASPPPSGPPSAAHTPFHQSPVEDKSEPRDFQEDSWGETKHSPGVSKEDSEEQTVKPGPEEGTSEEGKGPPTRSPQAQDMPVSIAGGQTGCTIQLLPEQDKAIVFETGEAGSNLGAGTLPGEVRTSTEEATEPQKDEVLRFTDQSLSPEDAESLSVLSVVSPDTTKQEATPRSPCSLKEQQPHKDLWPMVSPEDTQSLSFSEESPSKETSLDISSKQLSPESLGTLQFGELNLGKEERGPVMKAEDDSCHLAPVSIPEPHRATVSPSTDETPAGTLPGGSFSHSALSVDRKHSPGEITGPGGHFMTSDSSLTKSPESLSSPAMEDLAVEWEGKAPGKEKEPELKSETRQQKGQILPEKVAVVEQDLIIHQKDGALDEENKPGRQQDKTPEQKGRDLDEKDTAAELDKGPEPKEKDLDREDQGQRAGPPAEKDKASEQRDTDLQQTQATEPRDRAQERRDSEEKDKSLELRDRTPEEKDRILVQEDRAPEHSIPEPTQTDRAPDRKGTDDKEQKEEASEEKEQVLEQKDWALGKEGETLDQEARTAEQKDETLKEDKTQGQKSSFVEDKTTTSKETVLDQKSAEKADSVEQQDGAALEKTRALGLEESPAEGSKAREQEKKYWKEQDVVQGWRETSPTRGEPVGGQKEPVPAWEGKSPEQEVRYWRDRDITLQQDAYWRELSCDRKVWFPHELDGQGARPRYCEERESTFLDEGPDEQEITPLQHTPRSPWTSDFKDFQEPLPQKGLEVERWLAESPVGLPPEEEDKLTRSPFEIISPPASPPEMTGQRVPSAPGQESPVPDTESTAPMRNEPTTPSWLAEIPPWVPKDRPLPPAPLSPAPAPPTPAPEPHTPVPFSWGLAEYDSVVAAVQEGAAELEGGPYSPLGKDYRKAEGEREGEGGAGAPDSSSFSPKVPEAGESLATRDTEQTEPEQREPTPYPDERSFQYADIYEQMMLTGLGPACPTREPPLGASGDWPPHLSTKEEAAGCNTSAEKETSSPASPQNLQSDTPAFSYASLAGPAVPPRQEPDPGPNVEPSITPPAVPPRAPISLSKDLSPPLNGSTVSCSPDRRTPSPKETGRGHWDDGTNDSDLEKGAREQPEKETRSPSPHHPMPMGHSSLWPETEAYSSLSSDSHLGSVRPSLDFPASAFGFSSLQPAPPQLPSPAEPRSAPCGSLAFSGDRALALVPGTPTRTRHDEYLEVTKAPSLDSSLPQLPSPSSPGGPLLSNLPRPASPALSEGSSSEATTPVISSVAERFPPGLEAAEQSAEGLGSGKESAAHSLWDLTPLSPAPSASLDLAPAPAPAPAPAPGLPGDLGDGTLPCRPECTGELTKKPSPFLSPSGDHEANGPGETSLNPPGFVTATAEKEEAEAPHAWERGSWPEGAERSSRPDTLLSSEQPLRPGKSSGGPPCSLSSEVEAGPQGCATDPRPHCGELSPSFLNPPLPPSTDDSDLSTEEARLAGKGGRRRVGRPGATGGPCPMADETPPTSASDSGSSQSDSDVPPETEECPSITAEAALDSDEDGDFLPVDKAGGVSGTHHPRPGHDPPPTPLPDPRPSPPRPDVCMADPEGLSSESGRVERLREKGRPGRRAPGRAKPASPARRLDIRGKRSPTPGKGPVDRTSRTVPRPRSTPSQVTSAEEKDGHSPMSKGLVNGLKAGSTALGSKGGSGPPVYVDLAYIPNHCSGKTADQDFFRRVRASYYVVSGNDPANGEPSRAVLDALLEGKAQWGENLQVTLIPTHDTEVTREWYQQTHEQQQQLNVLVLASSSTVVMQDESFPACKIEF.

Ser114, Ser117, Ser118, Ser121, and Ser155 each carry phosphoserine. The residue at position 177 (Tyr177) is a Phosphotyrosine. A disordered region spans residues 310–329 (PSKIKHRADSKESLKAAPKT). Phosphoserine occurs at positions 319 and 322. The stretch at 336-338 (KRE) is repeat 1. An 11 X 3 AA repeats of K-K-[DE] region spans residues 336-541 (KREEVLEEGA…TQDFEELKRE (206 aa)). Residues 342 to 390 (EEGAKEARSELAKELAKTEKKAKEPSEKPPEKPSKSERVRGESSEALKA) show a composition bias toward basic and acidic residues. Disordered stretches follow at residues 342 to 718 (EEGA…SFLS), 737 to 808 (TIPG…TELT), 845 to 939 (EDQS…VGKE), 957 to 1078 (FGAP…QTGC), 1093 to 1344 (ETGE…ILPE), 1357 to 1646 (QKDG…SPEQ), 1693 to 1725 (ESTF…KDFQ), 1739 to 1843 (LAES…VPFS), and 1861 to 2644 (AELE…LVNG). Ser384 carries the phosphoserine modification. Positions 391 to 406 (EKRRLIKDKAGKKHLK) are enriched in basic residues. Basic and acidic residues-rich tracts occupy residues 407 to 464 (EKIS…KPDL) and 484 to 500 (VKVD…ELSS). A run of 9 repeats spans residues 415–417 (KKD), 420–422 (KKE), 424–426 (KKE), 427–429 (RKE), 431–433 (KKE), 436–438 (RKE), 440–442 (KKD), 444–446 (KKD), and 449–451 (RKD). Thr504 is modified (phosphothreonine). Residues 506 to 516 (PAQKGAAPPAA) are compositionally biased toward low complexity. A phosphoserine mark is found at Ser526 and Ser527. Composition is skewed to basic and acidic residues over residues 536 to 554 (EELK…DTGL) and 584 to 595 (EGEHVEREKEVV). The stretch at 539-541 (KRE) is repeat 11. Phosphoserine is present on residues Ser604 and Ser611. Basic and acidic residues-rich tracts occupy residues 614 to 631 (EVEK…REAE) and 638 to 675 (AARE…ETKA). Ser643 bears the Phosphoserine mark. Position 663 is a phosphothreonine (Thr663). Residues Ser666, Ser677, Ser690, and Ser785 each carry the phosphoserine modification. Polar residues-rich tracts occupy residues 845–858 (EDQS…PQTE) and 869–881 (TVTS…TEAT). A phosphoserine mark is found at Ser872, Ser875, Ser876, and Ser889. Phosphothreonine is present on Thr892. 22 positions are modified to phosphoserine: Ser894, Ser898, Ser907, Ser980, Ser990, Ser998, Ser1007, Ser1013, Ser1022, Ser1029, Ser1037, Ser1061, Ser1132, Ser1134, Ser1148, Ser1160, Ser1178, Ser1188, Ser1191, Ser1197, Ser1206, and Ser1209. Basic and acidic residues predominate over residues 1008-1028 (PVEDKSEPRDFQEDSWGETKH). Over residues 1142–1157 (SVLSVVSPDTTKQEAT) the composition is skewed to polar residues. The span at 1180–1190 (EDTQSLSFSEE) shows a compositional bias: polar residues. The span at 1198-1212 (LDISSKQLSPESLGT) shows a compositional bias: polar residues. A compositionally biased stretch (basic and acidic residues) spans 1220–1236 (LGKEERGPVMKAEDDSC). Ser1252, Ser1280, Ser1301, Ser1304, and Ser1307 each carry phosphoserine. The span at 1293–1308 (TSDSSLTKSPESLSSP) shows a compositional bias: low complexity. Basic and acidic residues-rich tracts occupy residues 1317 to 1336 (WEGK…ETRQ), 1357 to 1409 (QKDG…EDQG), 1416 to 1428 (AEKD…RDTD), 1436 to 1479 (EPRD…EHSI), and 1487 to 1574 (RAPD…KADS). Phosphoserine occurs at positions 1504, 1568, 1574, and 1594. The segment covering 1599-1613 (SKAREQEKKYWKEQD) has biased composition (basic and acidic residues). Ser1622, Ser1643, Ser1715, Ser1742, Ser1757, Ser1763, and Ser1767 each carry phosphoserine. Residues 1707-1718 (TPLQHTPRSPWT) show a composition bias toward polar residues. Thr1772 carries the post-translational modification Phosphothreonine. A phosphoserine mark is found at Ser1778 and Ser1784. Polar residues predominate over residues 1789–1803 (TESTAPMRNEPTTPS). A compositionally biased stretch (pro residues) spans 1818 to 1839 (LPPAPLSPAPAPPTPAPEPHTP). Over residues 1873–1885 (KDYRKAEGEREGE) the composition is skewed to basic and acidic residues. Residue Ser1897 is modified to Phosphoserine. The span at 1908 to 1930 (ATRDTEQTEPEQREPTPYPDERS) shows a compositional bias: basic and acidic residues. The residue at position 1923 (Thr1923) is a Phosphothreonine. The segment covering 1984–1997 (SSPASPQNLQSDTP) has biased composition (polar residues). Ser1988 is modified (phosphoserine). Residues 2008–2034 (AVPPRQEPDPGPNVEPSITPPAVPPRA) are compositionally biased toward pro residues. A Phosphothreonine modification is found at Thr2026. Phosphoserine occurs at positions 2043 and 2077. Residues 2055 to 2092 (PDRRTPSPKETGRGHWDDGTNDSDLEKGAREQPEKETR) are compositionally biased toward basic and acidic residues. A compositionally biased stretch (low complexity) spans 2115–2125 (SSLSSDSHLGS). Residues 2144-2153 (PAPPQLPSPA) are compositionally biased toward pro residues. Ser2204, Ser2221, Ser2225, Ser2228, Ser2229, and Ser2260 each carry phosphoserine. The span at 2226–2237 (EGSSSEATTPVI) shows a compositional bias: polar residues. A compositionally biased stretch (low complexity) spans 2271–2287 (DLTPLSPAPSASLDLAP). The span at 2288–2298 (APAPAPAPAPG) shows a compositional bias: pro residues. The segment covering 2299-2309 (LPGDLGDGTLP) has biased composition (low complexity). Basic and acidic residues predominate over residues 2352–2364 (AEKEEAEAPHAWE). Ser2424 is subject to Phosphoserine. Positions 2477–2489 (SASDSGSSQSDSD) are enriched in low complexity. Residues 2534–2550 (DPPPTPLPDPRPSPPRP) show a composition bias toward pro residues. The segment covering 2565–2575 (GRVERLREKGR) has biased composition (basic and acidic residues). A compositionally biased stretch (low complexity) spans 2613-2623 (RTVPRPRSTPS). 2 positions are modified to phosphoserine: Ser2620 and Ser2635.

This sequence belongs to the MAP1 family. As to quaternary structure, 3 different light chains, LC1 (a cleavage product of MAP1B), LC2 (a cleavage product of MAP1A) and LC3 (produced by one of the MAP1LC3 genes), can associate with the MAP1A or MAP1B heavy chains. Interacts with guanylate kinase-like domain of DLG1, DLG2 and DLG4. Binds to CSNK1D. Interacts with TIAM2. In terms of assembly, interacts with ELAVL4. Post-translationally, phosphorylated by CSNK1D. LC2 is generated from MAP1A by proteolytic processing. It is free to associate with both MAP1A and MAP1B. As to expression, brain, heart and muscle.

The protein localises to the cytoplasm. It localises to the cytoskeleton. In terms of biological role, structural protein involved in the filamentous cross-bridging between microtubules and other skeletal elements. This Rattus norvegicus (Rat) protein is Microtubule-associated protein 1A (Map1a).